A 62-amino-acid polypeptide reads, in one-letter code: Large ribosomal subunit protein bL28 (62 aa).

The protein belongs to the bacterial ribosomal protein bL28 family.

The chain is Large ribosomal subunit protein bL28 from Caldicellulosiruptor bescii (strain ATCC BAA-1888 / DSM 6725 / KCTC 15123 / Z-1320) (Anaerocellum thermophilum).